The sequence spans 143 residues: FAD synthase (143 aa).

Residues 10–11 (TF), 15–18 (HPGH), and aspartate 93 each bind ATP.

It belongs to the archaeal FAD synthase family. As to quaternary structure, homodimer. A divalent metal cation serves as cofactor.

The catalysed reaction is FMN + ATP + H(+) = FAD + diphosphate. Its pathway is cofactor biosynthesis; FAD biosynthesis; FAD from FMN: step 1/1. Its function is as follows. Catalyzes the transfer of the AMP portion of ATP to flavin mononucleotide (FMN) to produce flavin adenine dinucleotide (FAD) coenzyme. This Haloterrigena turkmenica (strain ATCC 51198 / DSM 5511 / JCM 9101 / NCIMB 13204 / VKM B-1734 / 4k) (Halococcus turkmenicus) protein is FAD synthase.